Reading from the N-terminus, the 214-residue chain is A-type ATP synthase subunit D (214 aa).

The protein belongs to the V-ATPase D subunit family. In terms of assembly, has multiple subunits with at least A(3), B(3), C, D, E, F, H, I and proteolipid K(x).

The protein localises to the cell membrane. Its function is as follows. Component of the A-type ATP synthase that produces ATP from ADP in the presence of a proton gradient across the membrane. The sequence is that of A-type ATP synthase subunit D from Desulfurococcus sp. (strain SY).